Consider the following 234-residue polypeptide: Viral Fc-gamma receptor-like protein IR11 (234 aa).

The first 23 residues, 1–23, serve as a signal peptide directing secretion; the sequence is MQTYSTPLTLVIVTSLFLFTTQG. Residues 24-122 enclose the Ig-like V-type domain; the sequence is SSSNAVEPTK…VKDTGVYLLQ (99 aa). At 24–182 the chain is on the extracellular side; it reads SSSNAVEPTK…DLKRQWSGLS (159 aa). Residues Asn-57, Asn-105, and Asn-110 are each glycosylated (N-linked (GlcNAc...) asparagine; by host). The chain crosses the membrane as a helical span at residues 183-203; it reads LHCAWVSGMMIFVGALVICFL. The Cytoplasmic segment spans residues 204–234; that stretch reads RSQRIGEQDAEHLRTDLDTEPLLLTVDGDLQ.

The protein belongs to the RL11 family.

The protein resides in the membrane. This chain is Viral Fc-gamma receptor-like protein IR11, found in Homo sapiens (Human).